A 423-amino-acid polypeptide reads, in one-letter code: Probable sucrose-phosphatase 1 (423 aa).

Belongs to the sucrose phosphatase family. Homodimer. Requires Mg(2+) as cofactor.

The enzyme catalyses sucrose 6(F)-phosphate + H2O = sucrose + phosphate. It functions in the pathway glycan biosynthesis; sucrose biosynthesis; sucrose from D-fructose 6-phosphate and UDP-alpha-D-glucose: step 2/2. Functionally, catalyzes the final step of sucrose synthesis. This chain is Probable sucrose-phosphatase 1 (SPP1), found in Arabidopsis thaliana (Mouse-ear cress).